Here is a 320-residue protein sequence, read N- to C-terminus: MSVAVLGAGAFGTALAISLARKAPTTLWCRSKDHADEIRSTRENTRRLPGAPLPDALAVTSDIACLGAHDVILLAVPMQKMRGFLTAHHAALSGKTLVACCKGIELDSGLGPVAVLRDTVPDATAALLTGPSFAADIALGLPTALTLACDPDETGKALQATLSTDNLRLYRTTDLTGAEIGGALKNVIAIACGAVIGARLGDSARAALMTRGYAEMQRLALARGARPETLAGLSGFGDLTLTCGSELSRNFRLGLSLGRGEAFDPSITVEGAATARATAKTAQEMGLEMPITQTVTNLLDQRLTISDAADQLLKRPLKEE.

The NADPH site is built by Phe11, Arg30, and Lys102. 3 residues coordinate sn-glycerol 3-phosphate: Lys102, Gly130, and Ser132. NADPH is bound at residue Ala134. Positions 185, 238, 248, 249, and 250 each coordinate sn-glycerol 3-phosphate. The active-site Proton acceptor is the Lys185. Position 249 (Arg249) interacts with NADPH. Position 270 (Glu270) interacts with NADPH.

This sequence belongs to the NAD-dependent glycerol-3-phosphate dehydrogenase family.

It localises to the cytoplasm. The catalysed reaction is sn-glycerol 3-phosphate + NAD(+) = dihydroxyacetone phosphate + NADH + H(+). It carries out the reaction sn-glycerol 3-phosphate + NADP(+) = dihydroxyacetone phosphate + NADPH + H(+). The protein operates within membrane lipid metabolism; glycerophospholipid metabolism. Its function is as follows. Catalyzes the reduction of the glycolytic intermediate dihydroxyacetone phosphate (DHAP) to sn-glycerol 3-phosphate (G3P), the key precursor for phospholipid synthesis. This Ruegeria sp. (strain TM1040) (Silicibacter sp.) protein is Glycerol-3-phosphate dehydrogenase [NAD(P)+].